A 728-amino-acid chain; its full sequence is Polyribonucleotide nucleotidyltransferase (728 aa).

Mg(2+)-binding residues include aspartate 489 and aspartate 495. A KH domain is found at 556 to 615; it reads PKIDTIKIDVDKIKIVIGKGGETIDKIIAETGVKIDIDEEGNVSIYSSDQDAINRAKEII. The 69-residue stretch at 625 to 693 folds into the S1 motif domain; that stretch reads DEVYHAKVVR…AKGRVDASMK (69 aa). A disordered region spans residues 691-728; it reads SMKALLPRPPKPEKSDKHHDKGHPHKKHEEAPLTQTEE. The span at 700–709 shows a compositional bias: basic and acidic residues; the sequence is PKPEKSDKHH.

Belongs to the polyribonucleotide nucleotidyltransferase family. It depends on Mg(2+) as a cofactor.

The protein resides in the cytoplasm. The enzyme catalyses RNA(n+1) + phosphate = RNA(n) + a ribonucleoside 5'-diphosphate. Functionally, involved in mRNA degradation. Catalyzes the phosphorolysis of single-stranded polyribonucleotides processively in the 3'- to 5'-direction. In Streptococcus gordonii (strain Challis / ATCC 35105 / BCRC 15272 / CH1 / DL1 / V288), this protein is Polyribonucleotide nucleotidyltransferase.